The primary structure comprises 148 residues: MLRYAVIACAALVVFAGALEFSDCGSKTGKFTRVAIEGCDTTKAECILKRNTTVSFSIDFALAEEATAVKTVVHGKVLGIEMPFPLANPDACVDSGLKCPLEKDESYRYTATLPVLRSYPKVSVLVKWELQDQDGADIICVEIPAKIQ.

A signal peptide spans 1-16 (MLRYAVIACAALVVFA). Cystine bridges form between Cys-24–Cys-140, Cys-39–Cys-46, and Cys-92–Cys-99. The N-linked (GlcNAc...) asparagine glycan is linked to Asn-51.

It belongs to the NPC2 family. As to expression, broadly expressed with a higher level of expression in many tissues, including midgut, salivary gland and ventral nerve cord.

Its subcellular location is the secreted. Functions redundantly with Npc2b in regulating sterol homeostasis and ecdysteroid biosynthesis, probably by controlling the availability of sterol substrate. This chain is NPC intracellular cholesterol transporter 2 homolog a, found in Drosophila melanogaster (Fruit fly).